A 200-amino-acid chain; its full sequence is Dipicolinate synthase subunit B (200 aa).

Dipicolinate synthase likely consists of DpaA and DpaB, since both proteins are required for DPA synthesis.

The catalysed reaction is (S)-2,3-dihydrodipicolinate + NADP(+) = dipicolinate + NADPH + H(+). Together with DpaA, catalyzes the conversion of dihydrodipicolinate to dipicolinate (DPA), which constitutes up to 10% of the dry weight of the spore. The protein is Dipicolinate synthase subunit B (dpaB) of Bacillus subtilis (strain 168).